The chain runs to 476 residues: Aspartyl/glutamyl-tRNA(Asn/Gln) amidotransferase subunit B (476 aa).

Belongs to the GatB/GatE family. GatB subfamily. Heterotrimer of A, B and C subunits.

It carries out the reaction L-glutamyl-tRNA(Gln) + L-glutamine + ATP + H2O = L-glutaminyl-tRNA(Gln) + L-glutamate + ADP + phosphate + H(+). The catalysed reaction is L-aspartyl-tRNA(Asn) + L-glutamine + ATP + H2O = L-asparaginyl-tRNA(Asn) + L-glutamate + ADP + phosphate + 2 H(+). Allows the formation of correctly charged Asn-tRNA(Asn) or Gln-tRNA(Gln) through the transamidation of misacylated Asp-tRNA(Asn) or Glu-tRNA(Gln) in organisms which lack either or both of asparaginyl-tRNA or glutaminyl-tRNA synthetases. The reaction takes place in the presence of glutamine and ATP through an activated phospho-Asp-tRNA(Asn) or phospho-Glu-tRNA(Gln). In Neisseria gonorrhoeae (strain ATCC 700825 / FA 1090), this protein is Aspartyl/glutamyl-tRNA(Asn/Gln) amidotransferase subunit B.